We begin with the raw amino-acid sequence, 96 residues long: Large ribosomal subunit protein eL14 (96 aa).

Belongs to the eukaryotic ribosomal protein eL14 family.

This chain is Large ribosomal subunit protein eL14, found in Staphylothermus marinus (strain ATCC 43588 / DSM 3639 / JCM 9404 / F1).